Consider the following 209-residue polypeptide: Transmembrane 4 L6 family member 19 (209 aa).

At 1–16 the chain is on the cytoplasmic side; that stretch reads MVSSPCTQASSRTCSR. Residues 17-37 traverse the membrane as a helical segment; it reads ILGLSLGTAALFAAGANVALL. Residues 38–59 lie on the Extracellular side of the membrane; it reads LPNWDVTYLLRGLLGRHAMLGT. Residues 60–80 traverse the membrane as a helical segment; that stretch reads GLWGGGLMVLTAAILISLMGW. Topologically, residues 81-93 are cytoplasmic; sequence RYGCFSKSGLCRS. Residues 94–114 traverse the membrane as a helical segment; it reads VLTALLSGGLALLGALICFVT. Residues 115–175 are Extracellular-facing; the sequence is SGVALKDGPF…PSAAVVWHVS (61 aa). N-linked (GlcNAc...) asparagine glycosylation occurs at Asn-133. The helical transmembrane segment at 176 to 196 threads the bilayer; sequence LFSALLCISLLQLLLVVVHVI. The tract at residues 186–196 is important for homodimerization; that stretch reads LQLLLVVVHVI. Over 197 to 209 the chain is Cytoplasmic; the sequence is NSLLGLFCSLCEK.

This sequence belongs to the L6 tetraspanin family. In terms of assembly, may form homodimers and homooligomers. Interacts with integrins ITGAV and ITGB3. Interacts with components of members of the V0 complex of vacuolar(H+)-ATPase (V-ATPase), including ATP6V0B and ATP6V0D2; this interaction inhibits V1-V0 complex assembly. As to expression, in adipose tissue, expressed by macrophages.

The protein resides in the lysosome membrane. Its subcellular location is the cytoplasm. It localises to the cytoskeleton. It is found in the cell projection. The protein localises to the filopodium. In terms of biological role, negatively regulates vacuolar (H+)-ATPase (V-ATPase) activity by interacting with members of V-ATPase V0 complex and hence inhibiting V1-V0 complex assembly. Required for multinucleation during osteoclast differentiation. This Homo sapiens (Human) protein is Transmembrane 4 L6 family member 19 (TM4SF19).